Consider the following 80-residue polypeptide: Acyl carrier protein (80 aa).

Positions 3–78 (DDTFSRIQSI…QVLEYIEAES (76 aa)) constitute a Carrier domain. Ser38 is modified (O-(pantetheine 4'-phosphoryl)serine).

It belongs to the acyl carrier protein (ACP) family. 4'-phosphopantetheine is transferred from CoA to a specific serine of apo-ACP by AcpS. This modification is essential for activity because fatty acids are bound in thioester linkage to the sulfhydryl of the prosthetic group.

It localises to the plastid. Its subcellular location is the chloroplast. Its pathway is lipid metabolism; fatty acid biosynthesis. Its function is as follows. Carrier of the growing fatty acid chain in fatty acid biosynthesis. In Trieres chinensis (Marine centric diatom), this protein is Acyl carrier protein.